A 386-amino-acid polypeptide reads, in one-letter code: MHLHEYQAKDLLTSYAIPMPPYRVASSVEEGRHTLNELGINAGVVKVQVHAGGRGKNGGVIVAKSPEEILAAVDQLLHMRFVSNQTSGEALPVEKVLITPLVNIAAEYYLAVIMDRKNRCPTIMLSKAGGVDIEEVAQKYPDQQLTISLTPFARLYNYQLRQMIKFMGWEGDTGKQGVQMIKNLVQCFYDNDASLLEINPLVRTQEGDLLVLDAKVTIDDNALYRHPKLEVLYDPSQENVRDVLAKQIGLSYIALDGNIGCLVNGAGLAMSTLDILKIHGGSAANFLDVGGSATEQQIQEAVSLVLSDENVEVLFINIFGGIMDCSAVASGLVAVMQTRENLIPTVVRLEGTNVELGKEIVQCSGIPCKFTDSLNTGAQLAVALSK.

The ATP-grasp domain maps to 9 to 244; the sequence is KDLLTSYAIP…PSQENVRDVL (236 aa). ATP-binding positions include lysine 46, 53 to 55, valine 102, and glutamate 107; that span reads GRG. Residues asparagine 199 and aspartate 213 each coordinate Mg(2+). Residues asparagine 264 and 321–323 contribute to the substrate site; that span reads GIM.

This sequence belongs to the succinate/malate CoA ligase beta subunit family. In terms of assembly, heterotetramer of two alpha and two beta subunits. Requires Mg(2+) as cofactor.

It carries out the reaction succinate + ATP + CoA = succinyl-CoA + ADP + phosphate. It catalyses the reaction GTP + succinate + CoA = succinyl-CoA + GDP + phosphate. It functions in the pathway carbohydrate metabolism; tricarboxylic acid cycle; succinate from succinyl-CoA (ligase route): step 1/1. Functionally, succinyl-CoA synthetase functions in the citric acid cycle (TCA), coupling the hydrolysis of succinyl-CoA to the synthesis of either ATP or GTP and thus represents the only step of substrate-level phosphorylation in the TCA. The beta subunit provides nucleotide specificity of the enzyme and binds the substrate succinate, while the binding sites for coenzyme A and phosphate are found in the alpha subunit. This chain is Succinate--CoA ligase [ADP-forming] subunit beta, found in Chlamydia abortus (strain DSM 27085 / S26/3) (Chlamydophila abortus).